We begin with the raw amino-acid sequence, 291 residues long: Acetyl-coenzyme A carboxylase carboxyl transferase subunit beta (291 aa).

The 269-residue stretch at 23-291 (VWHKCPSCTA…PPDLPVEESV (269 aa)) folds into the CoA carboxyltransferase N-terminal domain. Zn(2+)-binding residues include Cys27, Cys30, Cys46, and Cys49. The C4-type zinc finger occupies 27–49 (CPSCTAVLYRVELERNLEVCPKC).

This sequence belongs to the AccD/PCCB family. In terms of assembly, acetyl-CoA carboxylase is a heterohexamer composed of biotin carboxyl carrier protein (AccB), biotin carboxylase (AccC) and two subunits each of ACCase subunit alpha (AccA) and ACCase subunit beta (AccD). The cofactor is Zn(2+).

It localises to the cytoplasm. The enzyme catalyses N(6)-carboxybiotinyl-L-lysyl-[protein] + acetyl-CoA = N(6)-biotinyl-L-lysyl-[protein] + malonyl-CoA. It participates in lipid metabolism; malonyl-CoA biosynthesis; malonyl-CoA from acetyl-CoA: step 1/1. Its function is as follows. Component of the acetyl coenzyme A carboxylase (ACC) complex. Biotin carboxylase (BC) catalyzes the carboxylation of biotin on its carrier protein (BCCP) and then the CO(2) group is transferred by the transcarboxylase to acetyl-CoA to form malonyl-CoA. The protein is Acetyl-coenzyme A carboxylase carboxyl transferase subunit beta of Coxiella burnetii (strain Dugway 5J108-111).